A 394-amino-acid polypeptide reads, in one-letter code: MEGGGGAPAADAVMEDAAPQQQEPQQQAAMGIENIPATLSHGGRFIQYNIFGNIFEVTAKYRPPIMPIGKGAYGIVCSAHNSETNEHVAVKKIANAFDNKIDAKRTLREIKLVRHMDHENVVAIRDIVPPPQREVFNDVYIAYELMDTDLHQIIRSNQALSEEHCQYFLYQILRGLKYIHSANVLHRDLKPSNLLLNANCDLKICDFGLARVTSETDFMTEYVVTRWYRAPELLLNSSDYTAAIDVWSVGCIFMELMDRKPLFPGRDHVHQLRLLMELIGTPSEADLGFLNENAKRYIRQLPLYRRQSFQEKFPHVHPEAIDLVEKMLTFDPRQRITVENALAHPYLTSLHDISDEPVCTTPFSFDFEQHALTEEQMKELIYREALAFNPEYQQ.

The region spanning 62-347 is the Protein kinase domain; sequence RPPIMPIGKG…VENALAHPYL (286 aa). Residues 68-76 and lysine 91 each bind ATP; that span reads IGKGAYGIV. Aspartate 188 functions as the Proton acceptor in the catalytic mechanism. Threonine 220 carries the phosphothreonine modification. Positions 220–222 match the TXY motif; the sequence is TEY. Phosphotyrosine is present on tyrosine 222.

It belongs to the protein kinase superfamily. CMGC Ser/Thr protein kinase family. MAP kinase subfamily. It depends on Mg(2+) as a cofactor. Post-translationally, dually phosphorylated on Thr-220 and Tyr-222, which activates the enzyme. In terms of tissue distribution, leaves, roots, root apices, and dormant and growing axillary buds.

The enzyme catalyses L-seryl-[protein] + ATP = O-phospho-L-seryl-[protein] + ADP + H(+). The catalysed reaction is L-threonyl-[protein] + ATP = O-phospho-L-threonyl-[protein] + ADP + H(+). Its activity is regulated as follows. Activated by tyrosine and threonine phosphorylation. This is Mitogen-activated protein kinase homolog D5 from Pisum sativum (Garden pea).